The chain runs to 130 residues: Protein ApaG (130 aa).

In terms of domain architecture, ApaG spans 3 to 127 (EHESCGVRIS…FSLDRPSDRL (125 aa)).

This chain is Protein ApaG, found in Maricaulis maris (strain MCS10) (Caulobacter maris).